A 686-amino-acid chain; its full sequence is X-linked interleukin-1 receptor accessory protein-like 2 (686 aa).

Positions 1–16 are cleaved as a signal peptide; that stretch reads MKPPFLLALVVCSVVS. The Extracellular segment spans residues 17–354; the sequence is TNLKMVSKRN…LLRKKDLIYK (338 aa). Positions 18–132 constitute an Ig-like C2-type 1 domain; the sequence is NLKMVSKRNS…YCMKVSMSLT (115 aa). An intrachain disulfide couples cysteine 53 to cysteine 116. N-linked (GlcNAc...) asparagine glycans are attached at residues asparagine 63, asparagine 120, asparagine 136, asparagine 211, and asparagine 328. Ig-like C2-type domains follow at residues 141–232 and 239–347; these read CYNS…LKVT and PPKP…VLLR. 2 disulfide bridges follow: cysteine 162–cysteine 214 and cysteine 265–cysteine 331. A helical transmembrane segment spans residues 355 to 375; the sequence is IELAGGLGAIFLLLVLLVVIY. The Cytoplasmic portion of the chain corresponds to 376–686; that stretch reads KCYNIELMLF…KELSFTSDIW (311 aa). In terms of domain architecture, TIR spans 400 to 556; the sequence is KEYDAYLSYT…KFWKHLVYEM (157 aa). Glutamate 488 is a catalytic residue.

The protein belongs to the interleukin-1 receptor family. In terms of tissue distribution, detected at low levels in fetal and adult brain, in particular in the frontal lobe, temporal lobe and cerebellum. Detected at very low levels in skin, liver, fetal ovary and in placenta.

The protein resides in the membrane. It carries out the reaction NAD(+) + H2O = ADP-D-ribose + nicotinamide + H(+). The chain is X-linked interleukin-1 receptor accessory protein-like 2 (IL1RAPL2) from Homo sapiens (Human).